We begin with the raw amino-acid sequence, 339 residues long: Heat-inducible transcription repressor HrcA (339 aa).

It belongs to the HrcA family.

Its function is as follows. Negative regulator of class I heat shock genes (grpE-dnaK-dnaJ and groELS operons). Prevents heat-shock induction of these operons. This is Heat-inducible transcription repressor HrcA from Clostridium perfringens (strain SM101 / Type A).